The following is a 357-amino-acid chain: tRNA N6-adenosine threonylcarbamoyltransferase (357 aa).

Fe cation contacts are provided by H115 and H119. Substrate-binding positions include L137–G141, D170, G183, and N281. D309 lines the Fe cation pocket.

Belongs to the KAE1 / TsaD family. Fe(2+) is required as a cofactor.

It is found in the cytoplasm. The enzyme catalyses L-threonylcarbamoyladenylate + adenosine(37) in tRNA = N(6)-L-threonylcarbamoyladenosine(37) in tRNA + AMP + H(+). Functionally, required for the formation of a threonylcarbamoyl group on adenosine at position 37 (t(6)A37) in tRNAs that read codons beginning with adenine. Is involved in the transfer of the threonylcarbamoyl moiety of threonylcarbamoyl-AMP (TC-AMP) to the N6 group of A37, together with TsaE and TsaB. TsaD likely plays a direct catalytic role in this reaction. This Nitrobacter hamburgensis (strain DSM 10229 / NCIMB 13809 / X14) protein is tRNA N6-adenosine threonylcarbamoyltransferase.